A 240-amino-acid polypeptide reads, in one-letter code: Ribosomal RNA small subunit methyltransferase G (240 aa).

Residues G79, 130 to 131 (AE), and R149 each bind S-adenosyl-L-methionine.

Belongs to the methyltransferase superfamily. RNA methyltransferase RsmG family.

It is found in the cytoplasm. Specifically methylates the N7 position of a guanine in 16S rRNA. This is Ribosomal RNA small subunit methyltransferase G from Moorella thermoacetica (strain ATCC 39073 / JCM 9320).